Reading from the N-terminus, the 174-residue chain is NADH-quinone oxidoreductase subunit C (174 aa).

The protein belongs to the complex I 30 kDa subunit family. NDH-1 is composed of 14 different subunits. Subunits NuoB, C, D, E, F, and G constitute the peripheral sector of the complex.

It localises to the cell membrane. The catalysed reaction is a quinone + NADH + 5 H(+)(in) = a quinol + NAD(+) + 4 H(+)(out). Its function is as follows. NDH-1 shuttles electrons from NADH, via FMN and iron-sulfur (Fe-S) centers, to quinones in the respiratory chain. The immediate electron acceptor for the enzyme in this species is believed to be ubiquinone. Couples the redox reaction to proton translocation (for every two electrons transferred, four hydrogen ions are translocated across the cytoplasmic membrane), and thus conserves the redox energy in a proton gradient. The polypeptide is NADH-quinone oxidoreductase subunit C (Roseiflexus castenholzii (strain DSM 13941 / HLO8)).